Reading from the N-terminus, the 431-residue chain is uncharacterized protein (431 aa).

Disordered regions lie at residues 31 to 55 (VPASRIPEGGNVSASQPNGAHQAGV), 257 to 291 (QNGGRLSVSKDSDVYPTNGYGNGNQNRQNRSPKQD), and 365 to 431 (FQSP…HRKA). Residues 42–55 (VSASQPNGAHQAGV) show a composition bias toward polar residues. Residues 412-425 (VEYRRGRSLRESRE) are compositionally biased toward basic and acidic residues.

This is an uncharacterized protein from Arabidopsis thaliana (Mouse-ear cress).